Here is a 62-residue protein sequence, read N- to C-terminus: Protein YmcF (62 aa).

The protein belongs to the YmcF/YnqF peptide family.

This is Protein YmcF from Escherichia coli (strain K12).